The primary structure comprises 192 residues: dTTP/UTP pyrophosphatase (192 aa).

Residue D75 is the Proton acceptor of the active site.

The protein belongs to the Maf family. YhdE subfamily. The cofactor is a divalent metal cation.

It localises to the cytoplasm. It catalyses the reaction dTTP + H2O = dTMP + diphosphate + H(+). The enzyme catalyses UTP + H2O = UMP + diphosphate + H(+). Its function is as follows. Nucleoside triphosphate pyrophosphatase that hydrolyzes dTTP and UTP. May have a dual role in cell division arrest and in preventing the incorporation of modified nucleotides into cellular nucleic acids. The protein is dTTP/UTP pyrophosphatase of Pelodictyon phaeoclathratiforme (strain DSM 5477 / BU-1).